Consider the following 325-residue polypeptide: Tetraacyldisaccharide 4'-kinase (325 aa).

Residue 55–62 (TAGGNGKT) coordinates ATP.

It belongs to the LpxK family.

The enzyme catalyses a lipid A disaccharide + ATP = a lipid IVA + ADP + H(+). Its pathway is glycolipid biosynthesis; lipid IV(A) biosynthesis; lipid IV(A) from (3R)-3-hydroxytetradecanoyl-[acyl-carrier-protein] and UDP-N-acetyl-alpha-D-glucosamine: step 6/6. Functionally, transfers the gamma-phosphate of ATP to the 4'-position of a tetraacyldisaccharide 1-phosphate intermediate (termed DS-1-P) to form tetraacyldisaccharide 1,4'-bis-phosphate (lipid IVA). The sequence is that of Tetraacyldisaccharide 4'-kinase from Salmonella paratyphi A (strain ATCC 9150 / SARB42).